We begin with the raw amino-acid sequence, 338 residues long: Ketol-acid reductoisomerase (NADP(+)) (338 aa).

The region spanning 1–181 (MKVFYDKDCD…GGGKAGIIET (181 aa)) is the KARI N-terminal Rossmann domain. NADP(+) contacts are provided by residues 24–27 (YGSQ), arginine 47, and serine 52. The active site involves histidine 107. Residue glycine 133 coordinates NADP(+). Positions 182 to 327 (NFKEETETDL…AQLRAMMPWI (146 aa)) constitute a KARI C-terminal knotted domain. Residues aspartate 190, glutamate 194, glutamate 226, and glutamate 230 each contribute to the Mg(2+) site. Serine 251 lines the substrate pocket.

This sequence belongs to the ketol-acid reductoisomerase family. Requires Mg(2+) as cofactor.

The enzyme catalyses (2R)-2,3-dihydroxy-3-methylbutanoate + NADP(+) = (2S)-2-acetolactate + NADPH + H(+). It catalyses the reaction (2R,3R)-2,3-dihydroxy-3-methylpentanoate + NADP(+) = (S)-2-ethyl-2-hydroxy-3-oxobutanoate + NADPH + H(+). The protein operates within amino-acid biosynthesis; L-isoleucine biosynthesis; L-isoleucine from 2-oxobutanoate: step 2/4. It functions in the pathway amino-acid biosynthesis; L-valine biosynthesis; L-valine from pyruvate: step 2/4. In terms of biological role, involved in the biosynthesis of branched-chain amino acids (BCAA). Catalyzes an alkyl-migration followed by a ketol-acid reduction of (S)-2-acetolactate (S2AL) to yield (R)-2,3-dihydroxy-isovalerate. In the isomerase reaction, S2AL is rearranged via a Mg-dependent methyl migration to produce 3-hydroxy-3-methyl-2-ketobutyrate (HMKB). In the reductase reaction, this 2-ketoacid undergoes a metal-dependent reduction by NADPH to yield (R)-2,3-dihydroxy-isovalerate. The protein is Ketol-acid reductoisomerase (NADP(+)) of Paracidovorax citrulli (strain AAC00-1) (Acidovorax citrulli).